Consider the following 78-residue polypeptide: UPF0369 protein RP167 (78 aa).

It belongs to the SDHAF4 family.

This is UPF0369 protein RP167 from Rickettsia prowazekii (strain Madrid E).